The sequence spans 200 residues: Putative peroxiredoxin sll0755 (200 aa).

Residues 5–163 enclose the Thioredoxin domain; it reads LRVGQPAPDF…TLRVLKAIRH (159 aa). Catalysis depends on C50, which acts as the Cysteine sulfenic acid (-SOH) intermediate.

Belongs to the peroxiredoxin family. AhpC/Prx1 subfamily. Homodimer; disulfide-linked, upon oxidation.

It is found in the cytoplasm. The enzyme catalyses a hydroperoxide + [thioredoxin]-dithiol = an alcohol + [thioredoxin]-disulfide + H2O. Thiol-specific peroxidase that catalyzes the reduction of hydrogen peroxide and organic hydroperoxides to water and alcohols, respectively. Plays a role in cell protection against oxidative stress by detoxifying peroxides. The sequence is that of Putative peroxiredoxin sll0755 from Synechocystis sp. (strain ATCC 27184 / PCC 6803 / Kazusa).